Reading from the N-terminus, the 626-residue chain is Chaperone protein HtpG (626 aa).

Residues 1–339 form an a; substrate-binding region; it reads MSQNQETRGF…SNDLPLNVSR (339 aa). The tract at residues 340–555 is b; sequence EILQDNKITA…NDQMTTQMAK (216 aa). The c stretch occupies residues 556–626; the sequence is LFAAAGQPVP…FIKRINKLLG (71 aa).

The protein belongs to the heat shock protein 90 family. In terms of assembly, homodimer.

It is found in the cytoplasm. In terms of biological role, molecular chaperone. Has ATPase activity. The protein is Chaperone protein HtpG of Haemophilus influenzae (strain ATCC 51907 / DSM 11121 / KW20 / Rd).